The following is a 454-amino-acid chain: tRNA modification GTPase MnmE (454 aa).

Residues R23, E80, and K120 each coordinate (6S)-5-formyl-5,6,7,8-tetrahydrofolate. The TrmE-type G domain occupies 216 to 377; the sequence is GMKVVIAGRP…LRNHLKQSMG (162 aa). N226 is a K(+) binding site. GTP-binding positions include 226 to 231, 245 to 251, 270 to 273, 335 to 338, and 358 to 360; these read NAGKSS, TDIAGTT, DTAG, NKAD, and SAR. Residue S230 coordinates Mg(2+). Positions 245, 247, and 250 each coordinate K(+). T251 provides a ligand contact to Mg(2+). Position 454 (K454) interacts with (6S)-5-formyl-5,6,7,8-tetrahydrofolate.

Belongs to the TRAFAC class TrmE-Era-EngA-EngB-Septin-like GTPase superfamily. TrmE GTPase family. As to quaternary structure, homodimer. Heterotetramer of two MnmE and two MnmG subunits. It depends on K(+) as a cofactor.

It is found in the cytoplasm. In terms of biological role, exhibits a very high intrinsic GTPase hydrolysis rate. Involved in the addition of a carboxymethylaminomethyl (cmnm) group at the wobble position (U34) of certain tRNAs, forming tRNA-cmnm(5)s(2)U34. This is tRNA modification GTPase MnmE from Klebsiella pneumoniae subsp. pneumoniae (strain ATCC 700721 / MGH 78578).